The following is a 237-amino-acid chain: HTH-type transcriptional regulator GmuR (237 aa).

An HTH gntR-type domain is found at 1–69; that stretch reads MNKYEIIANE…RGHGTFIIQS (69 aa). The segment at residues 29–48 is a DNA-binding region (H-T-H motif); sequence EVSLAKEFNSSRMTMKRALD.

Its subcellular location is the cytoplasm. Its function is as follows. Transcriptional repressor of the gmuBACDREFG operon which is involved in the uptake and degradation of glucomannan. This chain is HTH-type transcriptional regulator GmuR (gmuR), found in Bacillus subtilis (strain 168).